The chain runs to 181 residues: Nucleoside triphosphate/diphosphate phosphatase (181 aa).

Residue R26 is the Proton donor of the active site. The Mg(2+) site is built by N90, D106, D108, D110, D123, and E126.

Belongs to the Ntdp family. Mg(2+) is required as a cofactor.

It catalyses the reaction a ribonucleoside 5'-triphosphate + H2O = a ribonucleoside 5'-diphosphate + phosphate + H(+). The catalysed reaction is a ribonucleoside 5'-diphosphate + H2O = a ribonucleoside 5'-phosphate + phosphate + H(+). Its function is as follows. Has nucleoside phosphatase activity towards nucleoside triphosphates and nucleoside diphosphates. This chain is Nucleoside triphosphate/diphosphate phosphatase, found in Ligilactobacillus salivarius (strain UCC118) (Lactobacillus salivarius).